Reading from the N-terminus, the 296-residue chain is Arginase (296 aa).

Mn(2+)-binding residues include His-98, Asp-124, His-126, and Asp-128. The L-arginine site is built by Asn-130, Ser-137, and Asp-178. 2 residues coordinate Mn(2+): Asp-225 and Asp-227. Positions 227 and 239 each coordinate L-arginine.

This sequence belongs to the arginase family. Monomer. Homodimer; dimerization is dispensable for catalytic activity. Mn(2+) is required as a cofactor.

It carries out the reaction L-arginine + H2O = urea + L-ornithine. Its pathway is nitrogen metabolism; urea cycle; L-ornithine and urea from L-arginine: step 1/1. With respect to regulation, substitution of the loosely bound surface exposed Mn(2+) with Mg(2+), Zn(2+), Ni(2+) or Co(2+) results in similar catalytic activity, substitution with Cd(2+) and Cu(2+) reduces catalytic activity and substitution with Hg(2+) and Ca(2+) inhibits the enzyme. Inhibited by L-norvaline. In terms of biological role, catalyzes the hydrolysis of L-arginine into urea and L-ornithine, which is a precursor for polyamine biosynthesis. By depleting host L-arginine, a substrate for nitric oxide synthase (NOS), prevents the production of nitric oxide (NO) by host activated macrophages, and thus allows the parasite to evade host immune response. In Entamoeba histolytica (strain ATCC 30459 / HM-1:IMSS / ABRM), this protein is Arginase.